Reading from the N-terminus, the 203-residue chain is Dephospho-CoA kinase (203 aa).

The DPCK domain maps to 10–203 (IIGITGNIGS…LTGGAKGGRG (194 aa)). 18 to 23 (GSGKST) lines the ATP pocket.

It belongs to the CoaE family.

It localises to the cytoplasm. The catalysed reaction is 3'-dephospho-CoA + ATP = ADP + CoA + H(+). It participates in cofactor biosynthesis; coenzyme A biosynthesis; CoA from (R)-pantothenate: step 5/5. Catalyzes the phosphorylation of the 3'-hydroxyl group of dephosphocoenzyme A to form coenzyme A. The chain is Dephospho-CoA kinase from Thermus thermophilus (strain ATCC BAA-163 / DSM 7039 / HB27).